We begin with the raw amino-acid sequence, 328 residues long: Acyl-CoA wax alcohol acyltransferase 1 (328 aa).

The next 2 membrane-spanning stretches (helical) occupy residues 12 to 32 and 34 to 53; these read SLSL…VQPL and ICLL…VWLL.

It belongs to the diacylglycerol acyltransferase family.

It is found in the endoplasmic reticulum membrane. The enzyme catalyses a long chain fatty alcohol + a fatty acyl-CoA = a wax ester + CoA. It catalyses the reaction 1,2-di-(9Z-octadecenoyl)-sn-glycerol + (9Z)-octadecenoyl-CoA = 1,2,3-tri-(9Z-octadecenoyl)-glycerol + CoA. The catalysed reaction is hexadecan-1-ol + (9Z)-octadecenoyl-CoA = hexadecanyl (9Z)-octadecenoate + CoA. It carries out the reaction decan-1-ol + (9Z)-octadecenoyl-CoA = 1-O-decyl-(9Z)-octadecenoate + CoA. The enzyme catalyses (9Z)-hexadecen-1-ol + (9Z)-octadecenoyl-CoA = 1-O-(9Z)-hexadecenyl (9Z)-octadecenoate + CoA. It catalyses the reaction octadecan-1-ol + (9Z)-octadecenoyl-CoA = 1-O-octadecyl (9Z)-octadecenoate + CoA. The catalysed reaction is (9Z)-octadecen-1-ol + (9Z)-octadecenoyl-CoA = 1-O-(9Z)-octadecenyl (9Z)-octadecenoate + CoA. It carries out the reaction hexadecan-1-ol + hexadecanoyl-CoA = hexadecanyl hexadecanoate + CoA. The enzyme catalyses hexadecan-1-ol + (9Z)-hexadecenoyl-CoA = 1-O-hexadecyl (9Z)-hexadecenoate + CoA. It catalyses the reaction hexadecan-1-ol + octadecanoyl-CoA = hexadecanyl octadecanoate + CoA. The catalysed reaction is eicosan-1-ol + (9Z)-octadecenoyl-CoA = 1-O-eicosanyl (9Z)-octadecenoate + CoA. In terms of biological role, acyltransferase that catalyzes the formation of ester bonds between fatty alcohols and fatty acyl-CoAs to form wax monoesters. Shows a strong preference for decyl alcohol (C10), with less activity towards C16 and C18 alcohols. Shows a strong preference for saturated acyl-CoAs. This chain is Acyl-CoA wax alcohol acyltransferase 1 (Awat1), found in Mus musculus (Mouse).